We begin with the raw amino-acid sequence, 246 residues long: 4'-phosphopantetheinyl transferase Svp (246 aa).

Residues 223-232 (AGTAEESAEG) show a composition bias toward low complexity. The tract at residues 223-246 (AGTAEESAEGAGKEATADDRTAVP) is disordered. A compositionally biased stretch (basic and acidic residues) spans 233–246 (AGKEATADDRTAVP).

It belongs to the P-Pant transferase superfamily. Gsp/Sfp/HetI/AcpT family.

It catalyses the reaction apo-[ACP] + CoA = holo-[ACP] + adenosine 3',5'-bisphosphate + H(+). In terms of biological role, transfers the 4'-phosphopantetheine moiety from coenzyme A to a Ser of an acyl-carrier-protein. The enzyme is able to transfer the cofactor to a broad range of enzymes with acyl- or peptidyl-carrier protein domains. The polypeptide is 4'-phosphopantetheinyl transferase Svp (svp) (Streptomyces mobaraensis (Streptoverticillium mobaraense)).